The sequence spans 114 residues: Probable prefoldin subunit 2 (114 aa).

This sequence belongs to the prefoldin subunit beta family. As to quaternary structure, heterohexamer of two PFD-alpha type and four PFD-beta type subunits.

Functionally, binds specifically to cytosolic chaperonin (c-CPN) and transfers target proteins to it. Binds to nascent polypeptide chain and promotes folding in an environment in which there are many competing pathways for nonnative proteins. The polypeptide is Probable prefoldin subunit 2 (Schizosaccharomyces pombe (strain 972 / ATCC 24843) (Fission yeast)).